The chain runs to 344 residues: Dihydroorotase (344 aa).

Positions 13 and 15 each coordinate Zn(2+). Residues 15–17 (HLR) and Asn-41 each bind substrate. Lys-99, His-136, and His-174 together coordinate Zn(2+). The residue at position 99 (Lys-99) is an N6-carboxylysine. His-136 is a binding site for substrate. A substrate-binding site is contributed by Leu-219. Asp-247 serves as a coordination point for Zn(2+). Asp-247 is a catalytic residue. Substrate is bound by residues His-251 and Ala-263.

This sequence belongs to the metallo-dependent hydrolases superfamily. DHOase family. Class II DHOase subfamily. In terms of assembly, homodimer. Requires Zn(2+) as cofactor.

The catalysed reaction is (S)-dihydroorotate + H2O = N-carbamoyl-L-aspartate + H(+). It participates in pyrimidine metabolism; UMP biosynthesis via de novo pathway; (S)-dihydroorotate from bicarbonate: step 3/3. In terms of biological role, catalyzes the reversible cyclization of carbamoyl aspartate to dihydroorotate. This Microcystis aeruginosa (strain NIES-843 / IAM M-2473) protein is Dihydroorotase.